Consider the following 462-residue polypeptide: Sodium-coupled neutral amino acid transporter 7 (462 aa).

Ser28 is subject to Phosphoserine. The next 11 helical transmembrane spans lie at 56 to 76, 82 to 102, 130 to 150, 178 to 198, 205 to 225, 239 to 259, 282 to 302, 319 to 339, 371 to 391, 395 to 415, and 428 to 448; these read AIFI…PAAF, VAAG…GLVI, LCEV…LIII, FTIS…REIG, FLSV…YIWP, ASWM…QCHV, AAMV…FLTF, MAVA…YPIL, VLQT…IPDI, ISVI…LCLI, and ASWW…AFIF.

It belongs to the amino acid/polyamine transporter 2 family. As to quaternary structure, interacts with the mTORC1 complex; this interaction mediates the recruitment of mTORC1 to the lysosome and its subsequent activation.

The protein localises to the lysosome membrane. The protein resides in the cell projection. It is found in the axon. It catalyses the reaction L-asparagine(in) + Na(+)(in) = L-asparagine(out) + Na(+)(out). It carries out the reaction L-glutamine(in) + Na(+)(in) = L-glutamine(out) + Na(+)(out). Its function is as follows. Symporter that selectively cotransports sodium ions and amino acids, such as L-glutamine and L-asparagine from the lysosome into the cytoplasm and may participates in mTORC1 activation. The transport activity requires an acidic lysosomal lumen. The chain is Sodium-coupled neutral amino acid transporter 7 from Homo sapiens (Human).